The primary structure comprises 591 residues: L-fucose isomerase (591 aa).

Residues Glu337 and Asp361 each act as proton acceptor in the active site. The Mn(2+) site is built by Glu337, Asp361, and His528.

The protein belongs to the L-fucose isomerase family. Homohexamer. Mn(2+) serves as cofactor.

Its subcellular location is the cytoplasm. It catalyses the reaction L-fucose = L-fuculose. It participates in carbohydrate degradation; L-fucose degradation; L-lactaldehyde and glycerone phosphate from L-fucose: step 1/3. Converts the aldose L-fucose into the corresponding ketose L-fuculose. The sequence is that of L-fucose isomerase from Escherichia coli (strain ATCC 8739 / DSM 1576 / NBRC 3972 / NCIMB 8545 / WDCM 00012 / Crooks).